Here is a 198-residue protein sequence, read N- to C-terminus: FMN-dependent NADH:quinone oxidoreductase (198 aa).

Residue Ser10 coordinates FMN.

It belongs to the azoreductase type 1 family. As to quaternary structure, homodimer. FMN is required as a cofactor.

The catalysed reaction is 2 a quinone + NADH + H(+) = 2 a 1,4-benzosemiquinone + NAD(+). The enzyme catalyses N,N-dimethyl-1,4-phenylenediamine + anthranilate + 2 NAD(+) = 2-(4-dimethylaminophenyl)diazenylbenzoate + 2 NADH + 2 H(+). Functionally, quinone reductase that provides resistance to thiol-specific stress caused by electrophilic quinones. In terms of biological role, also exhibits azoreductase activity. Catalyzes the reductive cleavage of the azo bond in aromatic azo compounds to the corresponding amines. The protein is FMN-dependent NADH:quinone oxidoreductase of Paraburkholderia phymatum (strain DSM 17167 / CIP 108236 / LMG 21445 / STM815) (Burkholderia phymatum).